Here is a 107-residue protein sequence, read N- to C-terminus: Iron-sulfur cluster assembly protein CyaY (107 aa).

It belongs to the frataxin family.

Involved in iron-sulfur (Fe-S) cluster assembly. May act as a regulator of Fe-S biogenesis. The chain is Iron-sulfur cluster assembly protein CyaY from Thioalkalivibrio sulfidiphilus (strain HL-EbGR7).